We begin with the raw amino-acid sequence, 353 residues long: Small ribosomal subunit biogenesis GTPase RsgA (353 aa).

The interval 1–24 (MSKNKLSKGQQRRVKANHQRRLKT) is disordered. Residues 10–23 (QQRRVKANHQRRLK) show a composition bias toward basic residues. A CP-type G domain is found at 104–274 (ASVLTRPDFY…VIDSPGVREF (171 aa)). GTP contacts are provided by residues 160 to 163 (NKID) and 214 to 222 (GQSGVGKSS). The Zn(2+) site is built by cysteine 298, cysteine 303, histidine 305, and cysteine 311.

This sequence belongs to the TRAFAC class YlqF/YawG GTPase family. RsgA subfamily. Monomer. Associates with 30S ribosomal subunit, binds 16S rRNA. Requires Zn(2+) as cofactor.

It localises to the cytoplasm. Its function is as follows. One of several proteins that assist in the late maturation steps of the functional core of the 30S ribosomal subunit. Helps release RbfA from mature subunits. May play a role in the assembly of ribosomal proteins into the subunit. Circularly permuted GTPase that catalyzes slow GTP hydrolysis, GTPase activity is stimulated by the 30S ribosomal subunit. The polypeptide is Small ribosomal subunit biogenesis GTPase RsgA (Klebsiella pneumoniae subsp. pneumoniae (strain ATCC 700721 / MGH 78578)).